We begin with the raw amino-acid sequence, 415 residues long: Queuine tRNA-ribosyltransferase accessory subunit 2 (415 aa).

4 residues coordinate Zn(2+): Cys-351, Cys-353, Cys-356, and His-382.

The protein belongs to the queuine tRNA-ribosyltransferase family. QTRT2 subfamily. In terms of assembly, heterodimer of a catalytic subunit qtrt1 and an accessory subunit qtrt2. It depends on Zn(2+) as a cofactor.

The protein localises to the cytoplasm. Its subcellular location is the mitochondrion outer membrane. Functionally, non-catalytic subunit of the queuine tRNA-ribosyltransferase (TGT) that catalyzes the base-exchange of a guanine (G) residue with queuine (Q) at position 34 (anticodon wobble position) in tRNAs with GU(N) anticodons (tRNA-Asp, -Asn, -His and -Tyr), resulting in the hypermodified nucleoside queuosine (7-(((4,5-cis-dihydroxy-2-cyclopenten-1-yl)amino)methyl)-7-deazaguanosine). The polypeptide is Queuine tRNA-ribosyltransferase accessory subunit 2 (Xenopus laevis (African clawed frog)).